A 481-amino-acid chain; its full sequence is Surface lipoprotein assembly modifier 1 (481 aa).

A signal peptide spans 1-23 (MSIQTKFILFLSSSLFLTPYSVA). Residues 25–192 (EKSPQPHDGR…QYLSALNQRD (168 aa)) are N-terminal domain. Residues 193–481 (QWKIQGGFSF…RIYVEISKTF (289 aa)) form a C-terminal probable beta barrel region. The next 14 membrane-spanning stretches (beta stranded) occupy residues 194–204 (WKIQGGFSFLN), 233–243 (SYFGNAEKKWS), 248–258 (HFTKLSLEGSG), 271–281 (NARAGVGLGYQ), 285–295 (FELSLMPFTEK), 315–325 (SGARLDLSNWL), 329–338 (WQISTALEYG), 353–363 (YLASATLLYLA), 368–377 (YWFGGADYNR), 390–400 (KNVRLGWGQEW), 405–414 (STRLILNYAR), 432–441 (YASVLTIWHR), 448–458 (ITPKLSWSYQK), and 471–481 (NRIYVEISKTF).

Belongs to the Slam family.

The protein localises to the cell outer membrane. Required for correct export to the cell surface of some cell outer membrane lipoproteins. The polypeptide is Surface lipoprotein assembly modifier 1 (Haemophilus influenzae (strain ATCC 51907 / DSM 11121 / KW20 / Rd)).